A 218-amino-acid chain; its full sequence is Glutathione S-transferase Mu 2 (218 aa).

A GST N-terminal domain is found at 2-88; it reads PMTLGYWDIR…YLARKHNLCG (87 aa). 7–8 is a glutathione binding site; sequence YW. A phosphoserine mark is found at Ser-27 and Ser-44. Residues 43-46, Lys-50, 59-60, and 72-73 contribute to the glutathione site; these read RSQW, NL, and QS. The region spanning 90–208 is the GST C-terminal domain; it reads TEEERIRVDI…KSSRFLSKPI (119 aa). Residue Tyr-116 participates in substrate binding. A Phosphoserine modification is found at Ser-117.

It belongs to the GST superfamily. Mu family. In terms of assembly, homodimer.

The protein resides in the cytoplasm. It carries out the reaction RX + glutathione = an S-substituted glutathione + a halide anion + H(+). The catalysed reaction is 11(S)-hydroxy-14(S),15(S)-epoxy-(5Z,8Z,12E)-eicosatrienoate + glutathione = (11S,15S)-dihydroxy-14(R)-S-glutathionyl-(5Z,8Z,12E)-eicosatrienoate. In terms of biological role, conjugation of reduced glutathione to a wide number of exogenous and endogenous hydrophobic electrophiles. Participates in the formation of novel hepoxilin regioisomers. In Mus musculus (Mouse), this protein is Glutathione S-transferase Mu 2.